The following is a 124-amino-acid chain: MNYLLVFVGGGLGATVRHAVNMICARAFGTHFPFGTFLINVSGSVVMGLIAGYLAFRGSAAQPWRLFVMTGVLGGYTTFSAFSLDTALLYERGEIGLAALYAIGSVVLAVVGLFAGLALVRHLT.

Helical transmembrane passes span 36–56, 66–86, and 100–120; these read TFLI…YLAF, LFVM…SLDT, and LYAI…LALV. Na(+) is bound by residues glycine 74 and threonine 77.

Belongs to the fluoride channel Fluc/FEX (TC 1.A.43) family.

The protein localises to the cell inner membrane. It catalyses the reaction fluoride(in) = fluoride(out). With respect to regulation, na(+) is not transported, but it plays an essential structural role and its presence is essential for fluoride channel function. In terms of biological role, fluoride-specific ion channel. Important for reducing fluoride concentration in the cell, thus reducing its toxicity. This chain is Fluoride-specific ion channel FluC 2, found in Nitrobacter hamburgensis (strain DSM 10229 / NCIMB 13809 / X14).